The chain runs to 505 residues: Cytochrome P450 2K6 (505 aa).

The helical transmembrane segment at 7–27 (FLLQGSPTGTILGALLLFLVI) threads the bilayer. C448 is a binding site for heme.

This sequence belongs to the cytochrome P450 family. Heme serves as cofactor. As to expression, detected in liver and ovary.

The protein resides in the endoplasmic reticulum membrane. It is found in the microsome membrane. In terms of biological role, metabolizes aflatoxin B1 (AFB1) to the cytotoxic derivative AFB1 exo-8,9-epoxide. Does not show activity towards lauric acid. This is Cytochrome P450 2K6 from Danio rerio (Zebrafish).